The sequence spans 439 residues: Guanine deaminase (439 aa).

Positions 82 and 84 each coordinate Zn(2+). Residues 84 to 87, 209 to 210, 237 to 240, and Asp-327 contribute to the substrate site; these read HYPQ, RF, and HLCE. Zn(2+)-binding residues include His-237 and Asp-327.

The protein belongs to the metallo-dependent hydrolases superfamily. ATZ/TRZ family. It depends on Zn(2+) as a cofactor.

The enzyme catalyses guanine + H2O + H(+) = xanthine + NH4(+). It participates in purine metabolism; guanine degradation; xanthine from guanine: step 1/1. Catalyzes the hydrolytic deamination of guanine, producing xanthine and ammonia. This Escherichia coli (strain K12) protein is Guanine deaminase (guaD).